The primary structure comprises 404 residues: Cysteine desulfurase IscS (404 aa).

Residues 73 to 74 (AT), N153, Q181, and 201 to 203 (SAH) contribute to the pyridoxal 5'-phosphate site. Position 204 is an N6-(pyridoxal phosphate)lysine (K204). T241 serves as a coordination point for pyridoxal 5'-phosphate. C327 serves as the catalytic Cysteine persulfide intermediate. Position 327 (C327) interacts with [2Fe-2S] cluster.

Belongs to the class-V pyridoxal-phosphate-dependent aminotransferase family. NifS/IscS subfamily. As to quaternary structure, homodimer. Forms a heterotetramer with IscU, interacts with other sulfur acceptors. Pyridoxal 5'-phosphate is required as a cofactor.

Its subcellular location is the cytoplasm. It carries out the reaction (sulfur carrier)-H + L-cysteine = (sulfur carrier)-SH + L-alanine. The protein operates within cofactor biosynthesis; iron-sulfur cluster biosynthesis. In terms of biological role, master enzyme that delivers sulfur to a number of partners involved in Fe-S cluster assembly, tRNA modification or cofactor biosynthesis. Catalyzes the removal of elemental sulfur atoms from cysteine to produce alanine. Functions as a sulfur delivery protein for Fe-S cluster synthesis onto IscU, an Fe-S scaffold assembly protein, as well as other S acceptor proteins. The chain is Cysteine desulfurase IscS from Anaeromyxobacter dehalogenans (strain 2CP-C).